A 361-amino-acid polypeptide reads, in one-letter code: MLGRALIRTFLSPTVPVAACTTQIAGVHHHKEAGDMKRFTGVTRSNKAKANRNTHVNEKLFRKMRGRKTLLVELPEDSARERESEMPPGEMRTELLKRGLNPYKEAQPRVWNEAQVTFQSIYGIADPYVPPETPASFTDVNNKFDEVKQRLQHKFYNWRMGTNRIRKKQGFEKFDVKTFCAKAEDIYERAHKAMEARDKKEMYRCITEYAFAKMWPDVENGSVRFELVSIVEPSRVVAVRCFDNPPKSGNDIAQITVRMHTRQKLALYDRFGGLILGSEDEEKDVVEYVVFENHIAVVDGEWRLHGKIYPKWIEPKQGTHITHQLTQKEAGVQVAKANALPLRTTEKLEEAKKEKEAANSS.

The protein belongs to the mitochondrion-specific ribosomal protein mL45 family.

The protein localises to the mitochondrion. The chain is Large ribosomal subunit protein mL45 (mrpl-45) from Caenorhabditis briggsae.